A 172-amino-acid polypeptide reads, in one-letter code: Mitochondrial import inner membrane translocase subunit Tim17-B (172 aa).

C9 and C78 form a disulfide bridge. The next 3 membrane-spanning stretches (helical) occupy residues C17 to F37, Q61 to D77, and V113 to L133. Residues P146–H172 are disordered.

This sequence belongs to the Tim17/Tim22/Tim23 family. Component of the TIM23 complex at least composed of TIMM23, TIMM17 (TIMM17A or TIMM17B) and TIMM50. The complex interacts with the TIMM44 component of the PAM complex and with DNAJC15. Forms one disulfide bond. As to expression, expression is abundant in heart and skeletal muscle, intermediate in brain, and weak in pancreas, placenta, kidney and liver.

It localises to the mitochondrion inner membrane. Functionally, essential component of the TIM23 complex, a complex that mediates the translocation of transit peptide-containing proteins across the mitochondrial inner membrane. This chain is Mitochondrial import inner membrane translocase subunit Tim17-B (TIMM17B), found in Homo sapiens (Human).